Here is an 80-residue protein sequence, read N- to C-terminus: Exodeoxyribonuclease 7 small subunit (80 aa).

It belongs to the XseB family. As to quaternary structure, heterooligomer composed of large and small subunits.

It localises to the cytoplasm. It catalyses the reaction Exonucleolytic cleavage in either 5'- to 3'- or 3'- to 5'-direction to yield nucleoside 5'-phosphates.. Bidirectionally degrades single-stranded DNA into large acid-insoluble oligonucleotides, which are then degraded further into small acid-soluble oligonucleotides. The polypeptide is Exodeoxyribonuclease 7 small subunit (Vibrio atlanticus (strain LGP32) (Vibrio splendidus (strain Mel32))).